Reading from the N-terminus, the 183-residue chain is Large ribosomal subunit protein uL5 (183 aa).

This sequence belongs to the universal ribosomal protein uL5 family. Part of the 50S ribosomal subunit; contacts the 5S rRNA and probably tRNA. Forms a bridge to the 30S subunit in the 70S ribosome.

In terms of biological role, this is one of the proteins that bind and probably mediate the attachment of the 5S RNA into the large ribosomal subunit, where it forms part of the central protuberance. In the 70S ribosome it contacts protein S13 of the 30S subunit (bridge B1b), connecting the 2 subunits; this bridge is implicated in subunit movement. May contact the P site tRNA; the 5S rRNA and some of its associated proteins might help stabilize positioning of ribosome-bound tRNAs. This is Large ribosomal subunit protein uL5 from Thermococcus kodakarensis (strain ATCC BAA-918 / JCM 12380 / KOD1) (Pyrococcus kodakaraensis (strain KOD1)).